The primary structure comprises 119 residues: Phospholipase A2 A2-actitoxin-Cgg2a (119 aa).

6 disulfides stabilise this stretch: Cys25-Cys119, Cys27-Cys43, Cys42-Cys101, Cys49-Cys94, Cys61-Cys87, and Cys78-Cys92. Ca(2+)-binding residues include Gly28 and Gly30. His46 is a catalytic residue. Ca(2+) is bound at residue Asp47. The active site involves Asp95.

It belongs to the phospholipase A2 family. As to quaternary structure, homodimer. The cofactor is Ca(2+).

It localises to the secreted. It is found in the nematocyst. It carries out the reaction a 1,2-diacyl-sn-glycero-3-phosphocholine + H2O = a 1-acyl-sn-glycero-3-phosphocholine + a fatty acid + H(+). In terms of biological role, sea anemone phospholipase A2 (PLA2). When incubated with plasma, this protein shows a moderate anticoagulant activity (0.15 ug of enzyme/200 uL of plasma), inhibiting clotting induced by thrombin. This enzyme also induces myotoxicity, and edema. PLA2 catalyzes the calcium-dependent hydrolysis of the 2-acyl groups in 3-sn-phosphoglycerides. The sequence is that of Phospholipase A2 A2-actitoxin-Cgg2a from Condylactis gigantea (Giant Caribbean anemone).